The primary structure comprises 239 residues: Serine protease SplF (239 aa).

The N-terminal stretch at 1 to 36 (MNKNIIIKSIAALTILTSITGVGTTVVDGIQQTAKA) is a signal peptide. Active-site charge relay system residues include H75, D114, and S192.

Belongs to the peptidase S1B family.

It localises to the secreted. The chain is Serine protease SplF (splF) from Staphylococcus aureus (strain JH9).